The chain runs to 180 residues: UPF0149 protein XOO1028 (180 aa).

It belongs to the UPF0149 family.

This Xanthomonas oryzae pv. oryzae (strain MAFF 311018) protein is UPF0149 protein XOO1028.